Consider the following 301-residue polypeptide: L-threonate dehydrogenase (301 aa).

NAD(+) contacts are provided by residues 6 to 34 and Thr101; that span reads YSVAVIGLGSMGMGAAVSCINAGLTTYGI. The active site involves Lys177. Residue Lys245 coordinates NAD(+).

It belongs to the HIBADH-related family. L-threonate dehydrogenase subfamily.

It catalyses the reaction L-threonate + NAD(+) = 2-dehydro-L-erythronate + NADH + H(+). Functionally, catalyzes oxidation of L-threonate to 2-oxo-tetronate. Can use either NAD(+) or NADP(+) as cosubstrate, with a preference for NAD(+). This Haemophilus influenzae (strain ATCC 51907 / DSM 11121 / KW20 / Rd) protein is L-threonate dehydrogenase.